Reading from the N-terminus, the 230-residue chain is Agamous-like MADS-box protein AGL11 (230 aa).

The MADS-box domain occupies arginine 3 to tyrosine 57. A K-box domain is found at alanine 87–tyrosine 177. Residues serine 211–glycine 230 form a disordered region. The segment covering aspartate 221–glycine 230 has biased composition (basic and acidic residues).

As to quaternary structure, interacts with AGL15 and AGL16.

Its subcellular location is the nucleus. In terms of biological role, probable transcription factor. Is required, together with TT16/AGL32 for the maternal control of endothelium formation, which is essential for female gametophyte development and fertilization, and seed formation. This is Agamous-like MADS-box protein AGL11 (AGL11) from Arabidopsis thaliana (Mouse-ear cress).